A 196-amino-acid polypeptide reads, in one-letter code: Peptidyl-tRNA hydrolase (196 aa).

His15 lines the tRNA pocket. His20 (proton acceptor) is an active-site residue. Residues Tyr66, Asn68, and Asn114 each contribute to the tRNA site.

This sequence belongs to the PTH family. As to quaternary structure, monomer.

It localises to the cytoplasm. The catalysed reaction is an N-acyl-L-alpha-aminoacyl-tRNA + H2O = an N-acyl-L-amino acid + a tRNA + H(+). Hydrolyzes ribosome-free peptidyl-tRNAs (with 1 or more amino acids incorporated), which drop off the ribosome during protein synthesis, or as a result of ribosome stalling. In terms of biological role, catalyzes the release of premature peptidyl moieties from peptidyl-tRNA molecules trapped in stalled 50S ribosomal subunits, and thus maintains levels of free tRNAs and 50S ribosomes. This is Peptidyl-tRNA hydrolase from Polynucleobacter necessarius subsp. necessarius (strain STIR1).